The following is a 262-amino-acid chain: 4-hydroxy-2-oxovalerate aldolase (262 aa).

Catalysis depends on H48, which acts as the Proton acceptor. Residue Q149 coordinates substrate. Position 151 (E151) interacts with Mg(2+). Substrate contacts are provided by A176 and D177. A Mg(2+)-binding site is contributed by D177.

Belongs to the HpcH/HpaI aldolase family.

The catalysed reaction is (S)-4-hydroxy-2-oxopentanoate = acetaldehyde + pyruvate. The protein operates within xenobiotic degradation; biphenyl degradation. Catalyzes the reversible retro-aldol cleavage of 4-hydroxy-2-oxovalerate to pyruvate and acetaldehyde. In Novosphingobium aromaticivorans (Sphingomonas aromaticivorans), this protein is 4-hydroxy-2-oxovalerate aldolase (bphF).